A 185-amino-acid polypeptide reads, in one-letter code: Peptide deformylase (185 aa).

2 residues coordinate Fe cation: C94 and H136. E137 is an active-site residue. H140 contributes to the Fe cation binding site.

This sequence belongs to the polypeptide deformylase family. It depends on Fe(2+) as a cofactor.

It carries out the reaction N-terminal N-formyl-L-methionyl-[peptide] + H2O = N-terminal L-methionyl-[peptide] + formate. In terms of biological role, removes the formyl group from the N-terminal Met of newly synthesized proteins. Requires at least a dipeptide for an efficient rate of reaction. N-terminal L-methionine is a prerequisite for activity but the enzyme has broad specificity at other positions. This chain is Peptide deformylase, found in Chlorobium limicola (strain DSM 245 / NBRC 103803 / 6330).